Here is a 212-residue protein sequence, read N- to C-terminus: Probable nicotinate-nucleotide adenylyltransferase (212 aa).

Belongs to the NadD family.

It catalyses the reaction nicotinate beta-D-ribonucleotide + ATP + H(+) = deamido-NAD(+) + diphosphate. The protein operates within cofactor biosynthesis; NAD(+) biosynthesis; deamido-NAD(+) from nicotinate D-ribonucleotide: step 1/1. Catalyzes the reversible adenylation of nicotinate mononucleotide (NaMN) to nicotinic acid adenine dinucleotide (NaAD). The protein is Probable nicotinate-nucleotide adenylyltransferase of Shewanella sp. (strain ANA-3).